The primary structure comprises 1091 residues: MCRRKPDIMILTQIEAKEACDWLRATGFPQYAQLYEDLLFPIDISSVKREHDFLDRDAIEALCRRLNTLNKCAVMKLEISPHRKRSEDSDEDEPCAISGKWTFQRDSKRWSRLEEFDVFSSKLDPAPGAPAEAPLKTAASHESMLTELSERQEVASVLSLSSTGSLPVHAPHAGDAATPRTNSVISVCSSGHFVGNDDSFCSLPSPKELSSFSFSMKGQEKNAKSKTRSLLKRMESLKLRGSPHSKHKAPSKLGLIISGPILQEGMDEEKLKQLNCVEISALNGNRINVPAVRKRSVSNSTQTSSSSSQSETSSAVSTPSPVTRTRSLSACNKRVGMYLEGFDPFNQSTFNNVMEQNCKNRESYPEDTVFYIPEDHKPGTFPKALSNGSFPPSGNNSSVNWRTGSFHGPGHISLRRENSSDSPKELKRRNSSSSMSSRLSIYDNVPGSILYSSSGDLADLENEDIFPELDDILYHVKGMQRIVNQWSEKFSDEGDSDSALDSVSPCPSSPKQIHLDVDNDRATPSDLDSTGNSLNEPEEPSDIPERRDSGVGASLTRSNRHRLRWHSFQSSHRPSLNSVSLQINCQSVAQMNLLQKYSLLKLTALLEKYTPSNKHGFSWAVPKFMKRIKVPDYKDRNVFGVPLTVNVQRTGQPLPQSIQQAMRYLRNHCLDQVGLFRKSGVKSRIQALRQMNESAIDCVNYEGQSAYDVADMLKQYFRDLPEPLMTNKLSETFLQIYQCVPKDQRLQAMKAAIMLLPDENREVLQTLLYFLSDVTAAVKENQMTPTNLAVCLAPSLFHLNTLKRENSSPRVMQRKQSLGKPDQKDLNENLAATQGLAHMIAECKKLFQVPEEMSRCRNSYTEQELKPLTLEALGRLRNDESADYQHFLQDCVDSLFKEVKEKFKGWVSYSTSEQAELSYKKVSEGPPLRLWRSTIEVPAMPEEILKRLLKEQHLWDVDLLDSKVIEILDSQTEIYQYVQNSMAPHPARDYVVLRTWRTNLPKGACALLLTSVDHDRAPVVGVRVNVLLSRYLIEPCGSGKSKLTYMCRADLRGHMPEWYTKSFGHLCAAEVVKIRDSFSNQNTETKDTKSR.

The SAM domain maps to 11 to 78 (LTQIEAKEAC…LNKCAVMKLE (68 aa)). Residues Ser86, Ser89, and Ser320 each carry the phosphoserine modification. The tract at residues 273 to 447 (QLNCVEISAL…RLSIYDNVPG (175 aa)) is focal adhesion-targeting (FAT). 3 disordered regions span residues 292–327 (VRKR…RTRS), 382–439 (PKAL…SSRL), and 491–553 (SDEG…GVGA). 2 stretches are compositionally biased toward low complexity: residues 297–323 (VSNS…SPVT) and 386–400 (SNGS…SSVN). Residues 414–425 (LRRENSSDSPKE) show a composition bias toward basic and acidic residues. The span at 499 to 511 (ALDSVSPCPSSPK) shows a compositional bias: polar residues. The span at 513–523 (IHLDVDNDRAT) shows a compositional bias: basic and acidic residues. Residues 526-535 (DLDSTGNSLN) show a composition bias toward polar residues. The polybasic cluster (PBR) stretch occupies residues 614-636 (KHGFSWAVPKFMKRIKVPDYKDR). The Rho-GAP domain occupies 641–847 (VPLTVNVQRT…HMIAECKKLF (207 aa)). An START domain is found at 877-1084 (RNDESADYQH…RDSFSNQNTE (208 aa)).

In terms of assembly, interacts with EF1A1, facilitates EF1A1 distribution to the membrane periphery and ruffles upon growth factor stimulation and suppresses cell migration. Interacts with tensin TNS1 (via N-terminus); the interaction is decreased by phosphorylation of TNS1. Interacts with TNS3 and PTEN; in resting cells, interacts with TNS3 (via C2 tensin-type domain) but, following growth factor stimulation, TNS3 and PTEN are phosphorylated which leads to weakened interaction with TNS3 and enhanced interaction with PTEN. Interacts (via C-terminus) with tensin TNS4 (via SH2 domain); the interaction is independent of tyrosine phosphorylation of DLC1.

Its subcellular location is the cytoplasm. It localises to the cell junction. It is found in the focal adhesion. The protein localises to the membrane. Functions as a GTPase-activating protein for the small GTPases RHOA, RHOB, RHOC and CDC42, terminating their downstream signaling. This induces morphological changes and detachment through cytoskeletal reorganization, playing a critical role in biological processes such as cell migration and proliferation. Also functions in vivo as an activator of the phospholipase PLCD1. Active DLC1 increases cell migration velocity but reduces directionality. Required for growth factor-induced epithelial cell migration; in resting cells, interacts with TNS3 while PTEN interacts with the p85 regulatory subunit of the PI3K kinase complex but growth factor stimulation induces phosphorylation of TNS3 and PTEN, causing them to change their binding preference so that PTEN interacts with DLC1 and TNS3 interacts with p85. The PTEN-DLC1 complex translocates to the posterior of migrating cells to activate RHOA while the TNS3-p85 complex translocates to the leading edge of migrating cells to promote RAC1 activation. The protein is Rho GTPase-activating protein 7 (DLC1) of Canis lupus familiaris (Dog).